A 107-amino-acid polypeptide reads, in one-letter code: Anti-adapter protein IraM (107 aa).

It belongs to the IraM/RssC family.

Its subcellular location is the cytoplasm. Functionally, inhibits RpoS proteolysis by regulating RssB activity, thereby increasing the stability of the sigma stress factor RpoS during magnesium starvation. The chain is Anti-adapter protein IraM from Escherichia coli (strain K12 / MC4100 / BW2952).